The following is a 416-amino-acid chain: Imidazolonepropionase (416 aa).

Histidine 82 and histidine 84 together coordinate Fe(3+). Zn(2+) contacts are provided by histidine 82 and histidine 84. 4-imidazolone-5-propanoate-binding residues include arginine 91, tyrosine 154, and histidine 187. Tyrosine 154 contributes to the N-formimidoyl-L-glutamate binding site. Histidine 252 is a Fe(3+) binding site. A Zn(2+)-binding site is contributed by histidine 252. A 4-imidazolone-5-propanoate-binding site is contributed by glutamate 255. Aspartate 326 contributes to the Fe(3+) binding site. A Zn(2+)-binding site is contributed by aspartate 326. Residues asparagine 328 and glycine 330 each coordinate N-formimidoyl-L-glutamate. Serine 331 contributes to the 4-imidazolone-5-propanoate binding site.

It belongs to the metallo-dependent hydrolases superfamily. HutI family. Zn(2+) serves as cofactor. Requires Fe(3+) as cofactor.

Its subcellular location is the cytoplasm. The catalysed reaction is 4-imidazolone-5-propanoate + H2O = N-formimidoyl-L-glutamate. Its pathway is amino-acid degradation; L-histidine degradation into L-glutamate; N-formimidoyl-L-glutamate from L-histidine: step 3/3. Its function is as follows. Catalyzes the hydrolytic cleavage of the carbon-nitrogen bond in imidazolone-5-propanoate to yield N-formimidoyl-L-glutamate. It is the third step in the universal histidine degradation pathway. This Parabacteroides distasonis (strain ATCC 8503 / DSM 20701 / CIP 104284 / JCM 5825 / NCTC 11152) protein is Imidazolonepropionase.